Here is a 129-residue protein sequence, read N- to C-terminus: Keratin-associated protein 5-6 (129 aa).

6 consecutive repeat copies span residues 28–31 (CCVP), 34–37 (CCKP), 40–43 (CCVP), 90–93 (CCKP), 109–112 (CCKP), and 119–122 (CCVP). Residues 28–112 (CCVPICCCKP…SCCQSSCCKP (85 aa)) are 6 X 4 AA repeats of C-C-X-P.

This sequence belongs to the KRTAP type 5 family. Interacts with hair keratins. Expressed in hair root and not in skin. Expressed also in liver and skeletal muscle.

In the hair cortex, hair keratin intermediate filaments are embedded in an interfilamentous matrix, consisting of hair keratin-associated protein (KRTAP), which are essential for the formation of a rigid and resistant hair shaft through their extensive disulfide bond cross-linking with abundant cysteine residues of hair keratins. The matrix proteins include the high-sulfur and high-glycine-tyrosine keratins. This Homo sapiens (Human) protein is Keratin-associated protein 5-6 (KRTAP5-6).